Reading from the N-terminus, the 75-residue chain is Probable protein BRICK1-B (75 aa).

Residues methionine 41–glutamate 72 adopt a coiled-coil conformation.

The protein belongs to the BRK1 family.

It is found in the cytoplasm. It localises to the cytoskeleton. Its function is as follows. Involved in regulation of actin and microtubule organization. Part of a WAVE complex that activates the Arp2/3 complex. In Xenopus laevis (African clawed frog), this protein is Probable protein BRICK1-B (brk1-b).